The sequence spans 228 residues: NAD(P)H-hydrate epimerase (228 aa).

Residues 9–215 (AISIDEELFN…RLEEKYSLEL (207 aa)) enclose the YjeF N-terminal domain. 58–62 (NNGGD) serves as a coordination point for (6S)-NADPHX. Residues asparagine 59 and aspartate 123 each contribute to the K(+) site. (6S)-NADPHX-binding positions include 127 to 133 (GFSFKPP) and aspartate 156. Residue serine 159 participates in K(+) binding.

Belongs to the NnrE/AIBP family. K(+) serves as cofactor.

The catalysed reaction is (6R)-NADHX = (6S)-NADHX. It catalyses the reaction (6R)-NADPHX = (6S)-NADPHX. Functionally, catalyzes the epimerization of the S- and R-forms of NAD(P)HX, a damaged form of NAD(P)H that is a result of enzymatic or heat-dependent hydration. This is a prerequisite for the S-specific NAD(P)H-hydrate dehydratase to allow the repair of both epimers of NAD(P)HX. This is NAD(P)H-hydrate epimerase from Anopheles darlingi (Mosquito).